The sequence spans 218 residues: 2-C-methyl-D-erythritol 4-phosphate cytidylyltransferase (218 aa).

Belongs to the IspD/TarI cytidylyltransferase family. IspD subfamily.

It catalyses the reaction 2-C-methyl-D-erythritol 4-phosphate + CTP + H(+) = 4-CDP-2-C-methyl-D-erythritol + diphosphate. The protein operates within isoprenoid biosynthesis; isopentenyl diphosphate biosynthesis via DXP pathway; isopentenyl diphosphate from 1-deoxy-D-xylulose 5-phosphate: step 2/6. Its function is as follows. Catalyzes the formation of 4-diphosphocytidyl-2-C-methyl-D-erythritol from CTP and 2-C-methyl-D-erythritol 4-phosphate (MEP). This chain is 2-C-methyl-D-erythritol 4-phosphate cytidylyltransferase, found in Chlamydia muridarum (strain MoPn / Nigg).